A 467-amino-acid chain; its full sequence is ATP synthase subunit beta, sodium ion specific (467 aa).

151-158 (GGAGVGKT) lines the ATP pocket.

The protein belongs to the ATPase alpha/beta chains family. As to quaternary structure, F-type ATPases have 2 components, CF(1) - the catalytic core - and CF(0) - the membrane proton channel. CF(1) has five subunits: alpha(3), beta(3), gamma(1), delta(1), epsilon(1). CF(0) has three main subunits: a, b and c.

The protein localises to the cell membrane. The catalysed reaction is 4 Na(+)(in) + ATP + H2O = 4 Na(+)(out) + ADP + phosphate + H(+). Functionally, produces ATP from ADP in the presence of a sodium ion gradient across the membrane. The beta chain is the catalytic subunit. The protein is ATP synthase subunit beta, sodium ion specific of Propionigenium modestum.